Here is a 466-residue protein sequence, read N- to C-terminus: Rho GTPase-activating protein 1 (466 aa).

2 disordered regions span residues 1 to 31 (MTEVLHFPSSPSASHSSSSSSSSPSPSSLSY) and 65 to 84 (EEQDLRRRSSTDGGEEDDGG). A compositionally biased stretch (low complexity) spans 8-31 (PSSPSASHSSSSSSSSPSPSSLSY). Positions 65-74 (EEQDLRRRSS) are enriched in basic and acidic residues. Positions 117 to 130 (IGWPTNVRHVAHVT) constitute a CRIB domain. The Rho-GAP domain maps to 162 to 342 (VSTESMQLSY…TLIEKTLRER (181 aa)). A disordered region spans residues 354–402 (PLEPSDESGHQSPSQSLAFNTSEQSEETQSDNIENAENQSSSSEISDEL). Polar residues-rich tracts occupy residues 363–376 (HQSPSQSLAFNTSE) and 383–397 (SDNIENAENQSSSSE).

Acts as a GTPase activator for the Rac-type GTPase by converting it to an inactive GDP-bound state. This is Rho GTPase-activating protein 1 (ROPGAP1) from Arabidopsis thaliana (Mouse-ear cress).